The following is a 1034-amino-acid chain: Beta-galactosidase (1034 aa).

Substrate contacts are provided by Asn-108 and Asp-207. Asp-207 is a binding site for Na(+). 3 residues coordinate Mg(2+): Glu-423, His-425, and Glu-468. Substrate-binding positions include Glu-468 and 544–547 (EYAH). Glu-468 (proton donor) is an active-site residue. Glu-544 serves as the catalytic Nucleophile. Asn-604 is a binding site for Mg(2+). Residues Phe-608 and Asn-611 each contribute to the Na(+) site. Positions 611 and 1010 each coordinate substrate.

The protein belongs to the glycosyl hydrolase 2 family. As to quaternary structure, homotetramer. Mg(2+) is required as a cofactor. Na(+) serves as cofactor.

It catalyses the reaction Hydrolysis of terminal non-reducing beta-D-galactose residues in beta-D-galactosides.. This chain is Beta-galactosidase, found in Klebsiella pneumoniae.